The chain runs to 525 residues: Glutamyl-tRNA(Gln) amidotransferase subunit A, mitochondrial (525 aa).

Residues Lys76 and Ser168 each act as charge relay system in the active site. The Acyl-ester intermediate role is filled by Ser192.

It belongs to the amidase family. GatA subfamily. Subunit of the heterotrimeric GatCAB amidotransferase (AdT) complex, composed of A (QRSL1), B (GATB) and C (GATC) subunits.

The protein localises to the mitochondrion. It carries out the reaction L-glutamyl-tRNA(Gln) + L-glutamine + ATP + H2O = L-glutaminyl-tRNA(Gln) + L-glutamate + ADP + phosphate + H(+). Its function is as follows. Allows the formation of correctly charged Gln-tRNA(Gln) through the transamidation of misacylated Glu-tRNA(Gln) in the mitochondria. The reaction takes place in the presence of glutamine and ATP through an activated gamma-phospho-Glu-tRNA(Gln). This chain is Glutamyl-tRNA(Gln) amidotransferase subunit A, mitochondrial (Qrsl1), found in Mus musculus (Mouse).